Here is a 480-residue protein sequence, read N- to C-terminus: Cytochrome b-c1 complex subunit 1, mitochondrial (480 aa).

The transit peptide at 1-34 directs the protein to the mitochondrion; that stretch reads MAASAVCRAACSGTQALLRTCRSPALLRLPALRG. N6-acetyllysine is present on residues lysine 111 and lysine 138. Lysine 163 is modified (N6-acetyllysine; alternate). Position 163 is an N6-succinyllysine; alternate (lysine 163). Phosphoserine is present on serine 212. Threonine 214 carries the post-translational modification Phosphothreonine.

Belongs to the peptidase M16 family. UQCRC1/QCR1 subfamily. As to quaternary structure, component of the ubiquinol-cytochrome c oxidoreductase (cytochrome b-c1 complex, complex III, CIII), a multisubunit enzyme composed of 11 subunits. The complex is composed of 3 respiratory subunits cytochrome b, cytochrome c1 and Rieske protein UQCRFS1, 2 core protein subunits UQCRC1/QCR1 and UQCRC2/QCR2, and 6 low-molecular weight protein subunits UQCRH/QCR6, UQCRB/QCR7, UQCRQ/QCR8, UQCR10/QCR9, UQCR11/QCR10 and subunit 9, the cleavage product of Rieske protein UQCRFS1. The complex exists as an obligatory dimer and forms supercomplexes (SCs) in the inner mitochondrial membrane with NADH-ubiquinone oxidoreductase (complex I, CI) and cytochrome c oxidase (complex IV, CIV), resulting in different assemblies (supercomplex SCI(1)III(2)IV(1) and megacomplex MCI(2)III(2)IV(2)). Interacts with UQCC6. Interacts with STMP1.

Its subcellular location is the mitochondrion inner membrane. Its function is as follows. Component of the ubiquinol-cytochrome c oxidoreductase, a multisubunit transmembrane complex that is part of the mitochondrial electron transport chain which drives oxidative phosphorylation. The respiratory chain contains 3 multisubunit complexes succinate dehydrogenase (complex II, CII), ubiquinol-cytochrome c oxidoreductase (cytochrome b-c1 complex, complex III, CIII) and cytochrome c oxidase (complex IV, CIV), that cooperate to transfer electrons derived from NADH and succinate to molecular oxygen, creating an electrochemical gradient over the inner membrane that drives transmembrane transport and the ATP synthase. The cytochrome b-c1 complex catalyzes electron transfer from ubiquinol to cytochrome c, linking this redox reaction to translocation of protons across the mitochondrial inner membrane, with protons being carried across the membrane as hydrogens on the quinol. In the process called Q cycle, 2 protons are consumed from the matrix, 4 protons are released into the intermembrane space and 2 electrons are passed to cytochrome c. The 2 core subunits UQCRC1/QCR1 and UQCRC2/QCR2 are homologous to the 2 mitochondrial-processing peptidase (MPP) subunits beta-MPP and alpha-MPP respectively, and they seem to have preserved their MPP processing properties. May be involved in the in situ processing of UQCRFS1 into the mature Rieske protein and its mitochondrial targeting sequence (MTS)/subunit 9 when incorporated into complex III. Seems to play an important role in the maintenance of proper mitochondrial function in nigral dopaminergic neurons. The sequence is that of Cytochrome b-c1 complex subunit 1, mitochondrial (Uqcrc1) from Rattus norvegicus (Rat).